Reading from the N-terminus, the 77-residue chain is Large ribosomal subunit protein uL29 (77 aa).

Belongs to the universal ribosomal protein uL29 family.

This is Large ribosomal subunit protein uL29 from Mycolicibacterium vanbaalenii (strain DSM 7251 / JCM 13017 / BCRC 16820 / KCTC 9966 / NRRL B-24157 / PYR-1) (Mycobacterium vanbaalenii).